Here is a 101-residue protein sequence, read N- to C-terminus: Small ribosomal subunit protein uS14A (101 aa).

The interval 35–56 (TSSYEQRLDAQRALSRQPRDAS) is disordered.

Belongs to the universal ribosomal protein uS14 family. Part of the 30S ribosomal subunit. Contacts proteins S3 and S10.

In terms of biological role, binds 16S rRNA, required for the assembly of 30S particles and may also be responsible for determining the conformation of the 16S rRNA at the A site. This chain is Small ribosomal subunit protein uS14A, found in Mycobacterium marinum (strain ATCC BAA-535 / M).